The primary structure comprises 584 residues: Levansucrase (584 aa).

The first 30 residues, 1-30 (MAHVRRKVATLNMALAGSLLMVLGAQSALA), serve as a signal peptide directing secretion. Residue glutamine 31 is modified to Pyrrolidone carboxylic acid. 5 residues coordinate sucrose: tryptophan 134, aspartate 135, serine 225, arginine 308, and aspartate 309. The Nucleophile role is filled by aspartate 135. Cysteine 339 and cysteine 395 are disulfide-bonded. Residue glutamate 401 is the Proton donor/acceptor of the active site.

Belongs to the glycosyl hydrolase 68 family. Monomer. In terms of processing, the N-terminus is blocked. The N-terminal Gln is cyclized to a pyroglutamic acid.

Its subcellular location is the secreted. It carries out the reaction [6)-beta-D-fructofuranosyl-(2-&gt;](n) alpha-D-glucopyranoside + sucrose = [6)-beta-D-fructofuranosyl-(2-&gt;](n+1) alpha-D-glucopyranoside + D-glucose. With respect to regulation, strongly inhibited by Hg(2+) and slightly activated by Co(2+). Not inhibited by the metal ion chelator EDTA, suggesting that this enzyme does not need a metal cofactor. Catalyzes the synthesis of levan, a fructose polymer, by transferring the fructosyl moiety from sucrose to a growing acceptor molecule. Also displays sucrose hydrolase activity. In vitro, catalyzes transfructosylation from sucrose to a variety of acceptors including water (sucrose hydrolysis), glucose (exchange reaction), fructan (polymerase reaction) and sucrose (oligofructoside synthesis). Levansucrase of G.diazotrophicus SRT4, unlike the enzyme of B.subtilis, causes accumulation of large quantities of tri- and tetrasaccharides but small quantities of high-molecular-mass levan. It may act more as a sucrose hydrolase than as a fructan polymerase, and may be the key enzyme in the sucrose metabolism of G.diazotrophicus SRT4. The sequence is that of Levansucrase from Gluconacetobacter diazotrophicus (Acetobacter diazotrophicus).